Here is a 921-residue protein sequence, read N- to C-terminus: Probable dipeptidyl-aminopeptidase B (921 aa).

Disordered regions lie at residues 1–33 (MAGH…TAST) and 45–66 (VAAN…RGER). The Cytoplasmic portion of the chain corresponds to 1–109 (MAGHPEENAQ…NKSVDKKLRR (109 aa)). A compositionally biased stretch (polar residues) spans 10-22 (QLLSTEQESMSRN). Residues 23 to 33 (SSDSVASTAST) are compositionally biased toward low complexity. Residues 110-130 (LIWIIGGVFIGAWVLALFIFL) form a helical; Signal-anchor for type II membrane protein membrane-spanning segment. Residues 131–921 (GKQAYKHSSE…VPLEIDAAKV (791 aa)) are Vacuolar-facing. The tract at residues 138-157 (SSESPHDPQATSSRGSGKKV) is disordered. N362 carries N-linked (GlcNAc...) asparagine glycosylation. S768 (charge relay system) is an active-site residue. Residue N822 is glycosylated (N-linked (GlcNAc...) asparagine). Residues D845 and H878 each act as charge relay system in the active site.

It belongs to the peptidase S9B family.

Its subcellular location is the vacuole membrane. The catalysed reaction is Release of an N-terminal dipeptide, Xaa-Yaa-|-Zaa-, from a polypeptide, preferentially when Yaa is Pro, provided Zaa is neither Pro nor hydroxyproline.. Functionally, type IV dipeptidyl-peptidase which removes N-terminal dipeptides sequentially from polypeptides having unsubstituted N-termini provided that the penultimate residue is proline. The chain is Probable dipeptidyl-aminopeptidase B (dapB) from Botryotinia fuckeliana (strain B05.10) (Noble rot fungus).